The sequence spans 119 residues: MVCSVVVALLALLSLSGLEALQHAPKIQVYSRHPAENGKPNFLNCYVSGFHPSDIEVDLLKNGKKIEKVEHSDLSFSKDWSFYLLYYTEFTPNEKDEYACRVSHVTFSTPKTVKWDRNI.

The signal sequence occupies residues 1–20 (MVCSVVVALLALLSLSGLEA). The Ig-like C1-type domain maps to 25–114 (PKIQVYSRHP…VTFSTPKTVK (90 aa)). Cysteine 45 and cysteine 100 are oxidised to a cystine.

Belongs to the beta-2-microglobulin family. As to quaternary structure, heterodimer of an alpha chain and a beta chain. Beta-2-microglobulin is the beta-chain of major histocompatibility complex class I molecules.

The protein localises to the secreted. Functionally, component of the class I major histocompatibility complex (MHC). Involved in the presentation of peptide antigens to the immune system. The protein is Beta-2-microglobulin (B2M) of Cebuella pygmaea (Pygmy marmoset).